A 354-amino-acid chain; its full sequence is Uroporphyrinogen decarboxylase (354 aa).

Residues 27–31 (RQAGR), Asp-77, Tyr-154, Thr-209, and His-327 contribute to the substrate site.

This sequence belongs to the uroporphyrinogen decarboxylase family. In terms of assembly, homodimer.

Its subcellular location is the cytoplasm. It carries out the reaction uroporphyrinogen III + 4 H(+) = coproporphyrinogen III + 4 CO2. The protein operates within porphyrin-containing compound metabolism; protoporphyrin-IX biosynthesis; coproporphyrinogen-III from 5-aminolevulinate: step 4/4. In terms of biological role, catalyzes the decarboxylation of four acetate groups of uroporphyrinogen-III to yield coproporphyrinogen-III. This is Uroporphyrinogen decarboxylase from Histophilus somni (strain 2336) (Haemophilus somnus).